The sequence spans 676 residues: Polyunsaturated fatty acid lipoxygenase ALOX15B (676 aa).

Residues alanine 2–lysine 124 enclose the PLAT domain. Ca(2+) is bound by residues glycine 15, glycine 17, aspartate 39, asparagine 40, glycine 42, glutamate 44, aspartate 85, and alanine 86. The 552-residue stretch at valine 125–isoleucine 676 folds into the Lipoxygenase domain. Fe cation is bound by residues histidine 373, histidine 378, histidine 553, and isoleucine 676.

This sequence belongs to the lipoxygenase family. It depends on Fe cation as a cofactor. In terms of tissue distribution, expressed in hair, prostate, lung, ovary, lymph node, spinal cord and cornea.

It is found in the nucleus. It localises to the cytoplasm. The protein localises to the cytosol. Its subcellular location is the cell membrane. The protein resides in the cytoskeleton. It is found in the membrane. It localises to the cell junction. The protein localises to the adherens junction. Its subcellular location is the focal adhesion. It carries out the reaction (5Z,8Z,11Z,14Z)-eicosatetraenoate + O2 = (15S)-hydroperoxy-(5Z,8Z,11Z,13E)-eicosatetraenoate. It catalyses the reaction (9Z,12Z)-octadecadienoate + O2 = 13-hydroperoxy-(9Z,11E)-octadecadienoate. The catalysed reaction is (5S)-hydroxy-(6E,8Z,11Z,14Z)-eicosatetraenoate + O2 = (5S)-hydroxy-(15S)-hydroperoxy-(6E,8Z,11Z,13E)-eicosatetraenoate. The enzyme catalyses (5Z,8Z,11Z,14Z)-eicosatetraenoate + O2 = 5-hydroperoxy-(6E,8Z,11Z,14Z)-eicosatetraenoate. It carries out the reaction (5S,6R)-dihydroxy-(7E,9E,11Z,14Z)-eicosatetraenoate + O2 = (5S,6R)-dihydroxy-(15S)-hydroperoxy-(7E,9E,11Z,13E)-eicosatetraenoate. It catalyses the reaction (5S)-hydroperoxy-(6E,8Z,11Z,14Z)-eicosatetraenoate + O2 = (5S,15S)-dihydroperoxy-(6E,8Z,11Z,13E)-eicosatetraenoate. The catalysed reaction is 2-(5Z,8Z,11Z,14Z-eicosatetraenoyl)-glycerol + O2 = 2-[15(S)-hydroperoxy-(5Z,8Z,11Z,13E)-eicosatetraenoyl]-glycerol. The enzyme catalyses (8S)-hydroperoxy-(5Z,9E,11Z,14Z)-eicosatetraenoate + O2 = (8S,15S)-dihydroperoxy-(5Z,9E,11Z,13E)-eicosatetraenoate. It carries out the reaction N-(5Z,8Z,11Z,14Z)-eicosatetraenoyl-L-alanine + O2 = N-(15S)-hydroperoxy-(5Z,8Z,11Z,13E)-eicosatetraenoyl-alanine. It catalyses the reaction N-(5Z,8Z,11Z,14Z)-eicosatetraenoyl-gamma-aminobutanoate + O2 = N-(15S)-hydroperoxy-(5Z,8Z,11Z,13E)-eicosatetraenoyl-gamma-aminobutanoate. The catalysed reaction is N-(5Z,8Z,11Z,14Z)-eicosatetraenoyl-glycine + O2 = N-(15S)-hydroperoxy-(5Z,8Z,11Z,13E)-eicosatetraenoyl-glycine. The enzyme catalyses N-(5Z,8Z,11Z,14Z)-eicosatetraenoyl-taurine + O2 = N-(15S)-hydroperoxy-(5Z,8Z,11Z,13E)-eicosatetraenoyl-taurine. It carries out the reaction 2-(5Z,8Z,11Z,14Z-eicosatetraenoyl)-glycerol + O2 = 2-[12-hydroperoxy-(5Z,8Z,10E,14Z)-eicosatetraenoyl]-glycerol. It catalyses the reaction 1-octadecanoyl-2-(5Z,8Z,11Z,14Z-eicosatetraenoyl)-sn-glycero-3-phosphocholine + O2 = 1-octadecanoyl-2-(15-hydroperoxy-5Z,8Z,11Z,13E-eicosatetraenoyl)-sn-glycero-3-phosphocholine. The catalysed reaction is a 1-acyl-2-(5Z,8Z,11Z,14Z-eicosatetraenoyl)-sn-glycero-3-phospho-(1D-myo-inositol) + O2 = a 1-acyl-2-(15-hydroperoxy-5Z,8Z,11Z,13E-eicosatetraenoyl)-sn-glycero-3-phospho-(1D-myo-inositol). The enzyme catalyses a 1-acyl-2-(8Z,11Z,14Z-eicosatrienoyl)-sn-glycero-3-phospho-(1D-myo-inositol) + O2 = a 1-acyl-2-(15-hydroperoxy-8Z,11Z,13E-eicosatrienoyl)-sn-glycero-3-phospho-(1D-myo-inositol). It carries out the reaction 1-octadecanoyl-2-(5Z,8Z,11Z,14Z)-eicosatetraenoyl-sn-glycero-3-phosphoethanolamine + O2 = 1-octadecanoyl-2-(15-hydroperoxy-5Z,8Z,11Z,13E-eicosatetraenoyl)-sn-glycero-3-phosphoethanolamine. It catalyses the reaction 1-octadecanoyl-2-(5Z,8Z,11Z,14Z-eicosatetraenoyl)-sn-glycero-3-phospho-(1D-myo-inositol) + O2 = 1-octadecanoyl-2-(15-hydroperoxy-5Z,8Z,11Z,13E-eicosatetraenoyl)-sn-glycero-3-phospho-(1D-myo-inositol). The catalysed reaction is (8Z,11Z,14Z)-eicosatrienoate + O2 = 15-hydroperoxy-(8Z,11Z,13E)-eicosatrienoate. The enzyme catalyses (7S)-hydroperoxy-(4Z,8E,10Z,13Z,16Z,19Z)-docosahexaenoate + O2 = (7S,17S)-dihydroperoxy-(4Z,8E,10Z,13Z,15E,19Z)-docosahexaenoate. It carries out the reaction (5Z,8Z,11Z,14Z)-eicosatetraenoate + O2 = 15-hydroperoxy-(5Z,8Z,11Z,13E)-eicosatetraenoate. It participates in lipid metabolism; hydroperoxy eicosatetraenoic acid biosynthesis. Functionally, non-heme iron-containing dioxygenase that catalyzes the stereo-specific peroxidation of free and esterified polyunsaturated fatty acids (PUFAs) generating a spectrum of bioactive lipid mediators. It inserts peroxyl groups at C15 of arachidonate ((5Z,8Z,11Z,14Z)-eicosatetraenoate) producing (15S)-hydroperoxyeicosatetraenoate/(15S)-HPETE. Also peroxidizes linoleate ((9Z,12Z)-octadecadienoate) to 13-hydroperoxyoctadecadienoate/13-HPODE. Oxygenates arachidonyl derivatives such as 2-arachidonoylglycerol (2-AG) leading to the production and extracellular release of 15-hydroxyeicosatetraenoyl glycerol (15-HETE-G) that acts as a peroxisome proliferator-activated receptor alpha agonist. Has the ability to efficiently class-switch ALOX5 pro-inflammatory mediators into anti-inflammatory intermediates. Participates in the sequential oxidations of DHA ((4Z,7Z,10Z,13Z,16Z,19Z)-docosahexaenoate) to generate specialized pro-resolving mediators (SPMs) resolvin D5 ((7S,17S)-diHPDHA), which can actively down-regulate the immune response and have anti-aggregation properties with platelets. In addition to free PUFAs hydrolyzed from phospholipids, it directly oxidizes PUFAs esterified to membrane-bound phospholipids. Has no detectable 8S-lipoxygenase activity on arachidonate but reacts with (8S)-HPETE to produce (8S,15S)-diHPETE. May regulate progression through the cell cycle and cell proliferation. May also regulate cytokine secretion by macrophages and therefore play a role in the immune response. May also regulate macrophage differentiation into proatherogenic foam cells. Does not convert arachidonic acid to 15S-hydroperoxyeicosatetraenoic acid/(15S)-HPETE. The polypeptide is Polyunsaturated fatty acid lipoxygenase ALOX15B (Homo sapiens (Human)).